The primary structure comprises 206 residues: uncharacterized protein (206 aa).

The first 17 residues, methionine 1–alanine 17, serve as a signal peptide directing secretion. Residue cysteine 18 is the site of N-palmitoyl cysteine attachment. Residue cysteine 18 is the site of S-diacylglycerol cysteine attachment. A coiled-coil region spans residues alanine 21–lysine 58. Positions glycine 97–glutamate 201 constitute a Cytochrome c domain. Positions 127, 130, and 131 each coordinate heme c.

The protein resides in the cell membrane. This is an uncharacterized protein from Aquifex aeolicus (strain VF5).